Reading from the N-terminus, the 176-residue chain is 3-hydroxyanthranilate 3,4-dioxygenase (176 aa).

Arg-44 serves as a coordination point for O2. Residues His-48, Glu-54, and His-92 each coordinate Fe cation. Glu-54 provides a ligand contact to substrate. Substrate-binding residues include Arg-96 and Glu-106. Fe cation-binding residues include Cys-121, Cys-124, Cys-158, and Cys-161.

It belongs to the 3-HAO family. As to quaternary structure, homodimer. Fe(2+) serves as cofactor.

The enzyme catalyses 3-hydroxyanthranilate + O2 = (2Z,4Z)-2-amino-3-carboxymuconate 6-semialdehyde. The protein operates within cofactor biosynthesis; NAD(+) biosynthesis; quinolinate from L-kynurenine: step 3/3. Its function is as follows. Catalyzes the oxidative ring opening of 3-hydroxyanthranilate to 2-amino-3-carboxymuconate semialdehyde, which spontaneously cyclizes to quinolinate. The chain is 3-hydroxyanthranilate 3,4-dioxygenase from Xanthomonas euvesicatoria pv. vesicatoria (strain 85-10) (Xanthomonas campestris pv. vesicatoria).